Here is a 344-residue protein sequence, read N- to C-terminus: L-threonine 3-dehydrogenase (344 aa).

A Zn(2+)-binding site is contributed by cysteine 42. Residues threonine 44 and histidine 47 each act as charge relay system in the active site. Zn(2+) is bound by residues histidine 67, glutamate 68, cysteine 97, cysteine 100, cysteine 103, and cysteine 111. Residues isoleucine 179, aspartate 199, arginine 204, 266–268 (LGI), and 290–291 (IY) each bind NAD(+).

The protein belongs to the zinc-containing alcohol dehydrogenase family. Homotetramer. The cofactor is Zn(2+).

The protein localises to the cytoplasm. It catalyses the reaction L-threonine + NAD(+) = (2S)-2-amino-3-oxobutanoate + NADH + H(+). Its pathway is amino-acid degradation; L-threonine degradation via oxydo-reductase pathway; glycine from L-threonine: step 1/2. Its function is as follows. Catalyzes the NAD(+)-dependent oxidation of L-threonine to 2-amino-3-ketobutyrate. This Mesorhizobium japonicum (strain LMG 29417 / CECT 9101 / MAFF 303099) (Mesorhizobium loti (strain MAFF 303099)) protein is L-threonine 3-dehydrogenase.